Here is a 188-residue protein sequence, read N- to C-terminus: Large ribosomal subunit protein eL18A (188 aa).

The interval 153–188 is disordered; it reads GKAPSTPHSRTKPYVLSKGRKFERARGRRASRGYKN. Positions 178 to 188 are enriched in basic residues; sequence RGRRASRGYKN.

This sequence belongs to the eukaryotic ribosomal protein eL18 family. As to quaternary structure, component of the large ribosomal subunit.

The protein resides in the cytoplasm. Component of the large ribosomal subunit. The ribosome is a large ribonucleoprotein complex responsible for the synthesis of proteins in the cell. The chain is Large ribosomal subunit protein eL18A (rpl18-a) from Xenopus laevis (African clawed frog).